The following is a 1551-amino-acid chain: Dual oxidase 1 (1551 aa).

The N-terminal stretch at 1-21 (MGFCLALAWTLLVGAWTPLGA) is a signal peptide. Residues 22–596 (QNPISWEVQR…YFEGSGFGFG (575 aa)) are Extracellular-facing. Residues 26–593 (SWEVQRFDGW…VRDYFEGSGF (568 aa)) are peroxidase-like; mediates peroxidase activity. An N-linked (GlcNAc...) asparagine glycan is attached at N94. Residues 150 to 172 (RWDPETGRSPSNPRDPANQVTGW) are disordered. Residues N342, N354, N461, and N534 are each glycosylated (N-linked (GlcNAc...) asparagine). A helical transmembrane segment spans residues 597–617 (VTIGTLCCFPLVSLLSAWIVA). The Cytoplasmic segment spans residues 618 to 1044 (RLRMRNFKRL…KRFIENYRRH (427 aa)). 3 EF-hand domains span residues 815–850 (PQDM…FMKG), 851–886 (SPEE…FIEI), and 895–930 (QLAE…HNSE). The Ca(2+) site is built by D828, D830, N832, Y834, E839, D864, D866, N868, and E875. Residues 956 to 1248 (YISQDMICPS…GSFALIQLPR (293 aa)) form an interaction with TXNDC11 region. A helical membrane pass occupies residues 1045–1065 (IGCVAVFYAIAGGLFLERAYY). The Extracellular portion of the chain corresponds to 1066–1080 (YAFAAHHTGITDTTR). A helical membrane pass occupies residues 1081-1101 (VGIILSRGTAASISFMFSYIL). Residues 1087–1269 (RGTAASISFM…YGGDKLVSLS (183 aa)) form the Ferric oxidoreductase domain. Residues 1102–1148 (LTMCRNLITFLRETFLNRYVPFDAAVDFHRLIASTAIVLTVLHSVGH) lie on the Cytoplasmic side of the membrane. The helical transmembrane segment at 1149-1171 (VVNVYLFSISPLSVLSCLFPGLF) threads the bilayer. Over 1172–1188 (HDDGSELPQKYYWWFFQ) the chain is Extracellular. Residues 1189–1209 (TVPGLTGVVLLLILAIMYVFA) form a helical membrane-spanning segment. The Cytoplasmic portion of the chain corresponds to 1210-1226 (SHHFRRRSFRGFWLTHH). The helical transmembrane segment at 1227 to 1247 (LYILLYVLLIIHGSFALIQLP) threads the bilayer. R1248 is a topological domain (extracellular). A helical transmembrane segment spans residues 1249–1269 (FHIFFLVPAIIYGGDKLVSLS). The FAD-binding FR-type domain occupies 1270–1376 (RKKVEISVVK…DGPFGEGHQE (107 aa)). Over 1270 to 1551 (RKKVEISVVK…THFSHHYENF (282 aa)) the chain is Cytoplasmic.

In the N-terminal section; belongs to the peroxidase family. As to quaternary structure, interacts with TXNDC11, TPO and CYBA. In terms of processing, N-glycosylated. As to expression, expressed in thyrocytes and tracheal surface epithelial cells (at protein level). Expressed in thyroid, trachea, bronchium, and to a lower extent, in placenta, testis, prostate, pancreas and heart.

The protein localises to the apical cell membrane. It catalyses the reaction NADH + O2 + H(+) = H2O2 + NAD(+). It carries out the reaction NADPH + O2 + H(+) = H2O2 + NADP(+). The protein operates within hormone biosynthesis; thyroid hormone biosynthesis. With respect to regulation, the NADPH oxidase activity is calcium-dependent. Peroxidase activity is inhibited by aminobenzohydrazide. Generates hydrogen peroxide which is required for the activity of thyroid peroxidase/TPO and lactoperoxidase/LPO. Plays a role in thyroid hormones synthesis and lactoperoxidase-mediated antimicrobial defense at the surface of mucosa. May have its own peroxidase activity through its N-terminal peroxidase-like domain. The polypeptide is Dual oxidase 1 (DUOX1) (Homo sapiens (Human)).